The following is an 80-amino-acid chain: Exodeoxyribonuclease 7 small subunit (80 aa).

This sequence belongs to the XseB family. In terms of assembly, heterooligomer composed of large and small subunits.

It is found in the cytoplasm. The catalysed reaction is Exonucleolytic cleavage in either 5'- to 3'- or 3'- to 5'-direction to yield nucleoside 5'-phosphates.. Functionally, bidirectionally degrades single-stranded DNA into large acid-insoluble oligonucleotides, which are then degraded further into small acid-soluble oligonucleotides. In Pseudomonas fluorescens (strain Pf0-1), this protein is Exodeoxyribonuclease 7 small subunit.